The following is a 388-amino-acid chain: Na(+)/H(+) antiporter NhaA (388 aa).

Transmembrane regions (helical) follow at residues 14–34 (GGII…MGAT), 59–79 (MLLW…GLEV), 95–115 (AFPV…YLAF), 125–145 (GWAI…ALLG), 154–174 (IFLM…IALF), 179–199 (LSIV…LLNL), 219–239 (VLKS…FIPL), 254–274 (VLHP…NAGV), 292–312 (IIAG…WLAL), 328–348 (IMAV…IASL), and 360–380 (WAKL…YSWL).

It belongs to the NhaA Na(+)/H(+) (TC 2.A.33) antiporter family.

Its subcellular location is the cell inner membrane. It carries out the reaction Na(+)(in) + 2 H(+)(out) = Na(+)(out) + 2 H(+)(in). Functionally, na(+)/H(+) antiporter that extrudes sodium in exchange for external protons. In Salmonella paratyphi A (strain ATCC 9150 / SARB42), this protein is Na(+)/H(+) antiporter NhaA.